The following is an 837-amino-acid chain: Striatin-interacting protein 1 (837 aa).

At Met1 the chain carries N-acetylmethionine. Disordered stretches follow at residues 1–66 and 333–423; these read MEPA…SESP and AASP…KGLP. Positions 18 to 35 are enriched in pro residues; sequence PQPPPPPPPATAQPPPGA. The segment covering 47–60 has biased composition (basic and acidic residues); that stretch reads KAREFNRNQRKDSE. Residues Ser59, Ser335, and Ser339 each carry the phosphoserine modification. Over residues 356–377 the composition is skewed to basic and acidic residues; the sequence is KALIKQDNLDAFNERDPYKADD. The segment covering 378–391 has biased composition (acidic residues); it reads SREEEEENDDDNSL. At Ser788 the chain carries Phosphoserine. The required for STRIPAK core complex formation stretch occupies residues 796–837; sequence DNCLQSVLGQRVDLPEDFQMNYDLWLEREVFSKPISWEELLQ.

It belongs to the STRIP family. Part of the core of STRIPAK complexes composed of PP2A catalytic and scaffolding subunits, the striatins (PP2A regulatory subunits), the striatin-associated proteins MOB4, STRIP1 and STRIP2, PDCD10 and members of the STE20 kinases, such as STK24 and STK26. The STRIPAK complex can be extended by adapter proteins such as SLMAP:SIKE1, CTTNBP2 or CTTNBP2NL. Interacts with CDC42BPB. Interacts with CTTNBP2NL.

It localises to the cytoplasm. Its function is as follows. Plays a role in the regulation of cell morphology and cytoskeletal organization. Required in the cortical actin filament dynamics and cell shape. Part of the striatin-interacting phosphatase and kinase (STRIPAK) complexes. STRIPAK complexes have critical roles in protein (de)phosphorylation and are regulators of multiple signaling pathways including Hippo, MAPK, nuclear receptor and cytoskeleton remodeling. Different types of STRIPAK complexes are involved in a variety of biological processes such as cell growth, differentiation, apoptosis, metabolism and immune regulation. In Macaca fascicularis (Crab-eating macaque), this protein is Striatin-interacting protein 1 (STRIP1).